Consider the following 422-residue polypeptide: Enolase (422 aa).

Gln-163 is a binding site for (2R)-2-phosphoglycerate. The active-site Proton donor is the Glu-205. The Mg(2+) site is built by Asp-242, Glu-283, and Asp-310. (2R)-2-phosphoglycerate is bound by residues Lys-335, Arg-364, Ser-365, and Lys-386. The active-site Proton acceptor is the Lys-335.

The protein belongs to the enolase family. The cofactor is Mg(2+).

It is found in the cytoplasm. Its subcellular location is the secreted. The protein localises to the cell surface. It catalyses the reaction (2R)-2-phosphoglycerate = phosphoenolpyruvate + H2O. It participates in carbohydrate degradation; glycolysis; pyruvate from D-glyceraldehyde 3-phosphate: step 4/5. Catalyzes the reversible conversion of 2-phosphoglycerate (2-PG) into phosphoenolpyruvate (PEP). It is essential for the degradation of carbohydrates via glycolysis. This Bdellovibrio bacteriovorus (strain ATCC 15356 / DSM 50701 / NCIMB 9529 / HD100) protein is Enolase.